We begin with the raw amino-acid sequence, 340 residues long: Phenylalanine--tRNA ligase alpha subunit (340 aa).

E254 provides a ligand contact to Mg(2+).

This sequence belongs to the class-II aminoacyl-tRNA synthetase family. Phe-tRNA synthetase alpha subunit type 1 subfamily. In terms of assembly, tetramer of two alpha and two beta subunits. Mg(2+) is required as a cofactor.

The protein localises to the cytoplasm. It catalyses the reaction tRNA(Phe) + L-phenylalanine + ATP = L-phenylalanyl-tRNA(Phe) + AMP + diphosphate + H(+). This is Phenylalanine--tRNA ligase alpha subunit from Chloroherpeton thalassium (strain ATCC 35110 / GB-78).